The chain runs to 585 residues: Protein FAM83D (585 aa).

The segment at 1-296 (MAARFELLDD…LYAQSEPISS (296 aa)) is DUF1669. Serine 295 is subject to Phosphoserine. Disordered stretches follow at residues 334–411 (LSST…TSSS) and 425–482 (AASS…SQGS). Residues 337–585 (TPRKSNLGPE…RDIALYPPYQ (249 aa)) form a required for interaction with KIF22 and function in chromosome congression region. Composition is skewed to basic and acidic residues over residues 347 to 360 (EPPK…RPDS) and 369 to 383 (DYFH…DSKV). Residues 425 to 441 (AASSQATVWSKSTTTQT) are compositionally biased toward polar residues. Serine 458 is modified (phosphoserine). Positions 458 to 482 (SPASKMSVSRSSSVRSSSSVSSQGS) are enriched in low complexity. The residue at position 511 (threonine 511) is a Phosphothreonine.

It belongs to the FAM83 family. As to quaternary structure, interacts with FBXW7; promotes FBXW7 degradation. May interact with RAF1. Interacts with KIF22; recruits KIF22 to mitotic spindle microtubules. Interacts (via C-terminus) with DYNLL1. Interacts with HMMR. Directly interacts (via DUF1669) with CSNK1A1 and CSNK1A1L. Phosphorylated during mitosis.

It is found in the cytoplasm. It localises to the cytoskeleton. Its subcellular location is the spindle. The protein resides in the spindle pole. Its function is as follows. Through the degradation of FBXW7, may act indirectly on the expression and downstream signaling of MTOR, JUN and MYC. May play also a role in cell proliferation through activation of the ERK1/ERK2 signaling cascade. May also be important for proper chromosome congression and alignment during mitosis through its interaction with KIF22. The chain is Protein FAM83D from Mus musculus (Mouse).